The following is a 131-amino-acid chain: Holo-[acyl-carrier-protein] synthase (131 aa).

Positions 8 and 59 each coordinate Mg(2+).

This sequence belongs to the P-Pant transferase superfamily. AcpS family. Mg(2+) serves as cofactor.

It localises to the cytoplasm. It catalyses the reaction apo-[ACP] + CoA = holo-[ACP] + adenosine 3',5'-bisphosphate + H(+). Transfers the 4'-phosphopantetheine moiety from coenzyme A to a Ser of acyl-carrier-protein. This is Holo-[acyl-carrier-protein] synthase from Paramagnetospirillum magneticum (strain ATCC 700264 / AMB-1) (Magnetospirillum magneticum).